Reading from the N-terminus, the 270-residue chain is MAADSSLEFLKSVKGVILDMCGVLYDSGEGGGRAIHGSVEAVKRLMDSGLMLRFCTNETQNTRERFVQKLRVMGFDISVSHVFSPAPAVVQILQKRHLRPHLLVHDDLIPEFDGVDTSSPNCVVIGDAAEKFSYQNLNEAFRVLIGLEKPVLFSLGRGRYYKETDGLKLDVGVYMKALEYACDVQAEVVGKPSSEFFKTVLNDMNLQPHEVVMVGDDLVNDVGGAQSCGMKGLQVRTGKYRPSDECDPSVRADAYVDDLSAAVDAILTNR.

D19 and C21 together coordinate Mg(2+). Substrate contacts are provided by residues 19 to 21 (DMC), 56 to 57 (TN), and K191. D216 contacts Mg(2+).

This sequence belongs to the HAD-like hydrolase superfamily. It depends on Mg(2+) as a cofactor.

The protein resides in the cytoplasm. It is found in the nucleus. It carries out the reaction diphosphate + H2O = 2 phosphate + H(+). Functionally, phosphatase that hydrolyzes imidodiphosphate, 3-phosphohistidine and 6-phospholysine. Has broad substrate specificity and can also hydrolyze inorganic diphosphate, but with lower efficiency. The polypeptide is Phospholysine phosphohistidine inorganic pyrophosphate phosphatase (lhpp) (Danio rerio (Zebrafish)).